Reading from the N-terminus, the 292-residue chain is Nucleotide-binding protein AZOSEA20610 (292 aa).

8 to 15 (GLSGSGKS) lines the ATP pocket. Position 57 to 60 (57 to 60 (DVRS)) interacts with GTP.

It belongs to the RapZ-like family.

In terms of biological role, displays ATPase and GTPase activities. In Aromatoleum aromaticum (strain DSM 19018 / LMG 30748 / EbN1) (Azoarcus sp. (strain EbN1)), this protein is Nucleotide-binding protein AZOSEA20610.